The primary structure comprises 543 residues: Periplasmic oligopeptide-binding protein OppA (543 aa).

Residues 1 to 26 form the signal peptide; sequence MTNITKRSLVAAGVLAALMAGNVALA. Cysteine 297 and cysteine 443 are oxidised to a cystine.

This sequence belongs to the bacterial solute-binding protein 5 family. The complex is composed of two ATP-binding proteins (OppD and OppF), two transmembrane proteins (OppB and OppC) and a solute-binding protein (OppA).

It localises to the periplasm. Part of the ABC transporter complex OppABCDF involved in the uptake of oligopeptides. Plays an important nutritional role. Binds peptides containing from two to five amino acid residues. Displays a preference for tripeptides and tetrapeptides over dipeptides and pentapeptides, for peptides composed of L-amino acids and for positively charged peptides. Cannot bind the cell wall peptide L-Ala-D-Gly-gamma-meso-diaminopimelic acid. The protein is Periplasmic oligopeptide-binding protein OppA of Escherichia coli (strain K12).